A 458-amino-acid polypeptide reads, in one-letter code: Chromosomal replication initiator protein DnaA (458 aa).

The domain I, interacts with DnaA modulators stretch occupies residues 1 to 93; the sequence is MKTELSEVWQ…NVIEDPAAEP (93 aa). The domain II stretch occupies residues 94-119; sequence VDAPNVADLPAGTSAPAAEQNARLLG. A domain III, AAA+ region region spans residues 120-336; that stretch reads YINPKYTFET…GALTRVVAYA (217 aa). The ATP site is built by G164, G166, K167, and T168. The segment at 337–458 is domain IV, binds dsDNA; that stretch reads NMLKCPLTYD…EQLIARIRAE (122 aa).

Belongs to the DnaA family. As to quaternary structure, oligomerizes as a right-handed, spiral filament on DNA at oriC.

The protein localises to the cytoplasm. Its function is as follows. Plays an essential role in the initiation and regulation of chromosomal replication. ATP-DnaA binds to the origin of replication (oriC) to initiate formation of the DNA replication initiation complex once per cell cycle. Binds the DnaA box (a 9 base pair repeat at the origin) and separates the double-stranded (ds)DNA. Forms a right-handed helical filament on oriC DNA; dsDNA binds to the exterior of the filament while single-stranded (ss)DNA is stabiized in the filament's interior. The ATP-DnaA-oriC complex binds and stabilizes one strand of the AT-rich DNA unwinding element (DUE), permitting loading of DNA polymerase. After initiation quickly degrades to an ADP-DnaA complex that is not apt for DNA replication. Binds acidic phospholipids. The polypeptide is Chromosomal replication initiator protein DnaA (Symbiobacterium thermophilum (strain DSM 24528 / JCM 14929 / IAM 14863 / T)).